The sequence spans 164 residues: Interleukin-10 (164 aa).

The N-terminal stretch at 1–18 (MPSSALLCCLIFLARVAA) is a signal peptide. 2 disulfide bridges follow: Cys30–Cys126 and Cys80–Cys132. Asn134 carries N-linked (GlcNAc...) asparagine glycosylation.

It belongs to the IL-10 family. Homodimer. Interacts with IL10RA and IL10RB.

The protein resides in the secreted. Major immune regulatory cytokine that acts on many cells of the immune system where it has profound anti-inflammatory functions, limiting excessive tissue disruption caused by inflammation. Mechanistically, IL10 binds to its heterotetrameric receptor comprising IL10RA and IL10RB leading to JAK1 and STAT2-mediated phosphorylation of STAT3. In turn, STAT3 translocates to the nucleus where it drives expression of anti-inflammatory mediators. Targets antigen-presenting cells (APCs) such as macrophages and monocytes and inhibits their release of pro-inflammatory cytokines including granulocyte-macrophage colony-stimulating factor /GM-CSF, granulocyte colony-stimulating factor/G-CSF, IL-1 alpha, IL-1 beta, IL-6, IL-8 and TNF-alpha. Also interferes with antigen presentation by reducing the expression of MHC-class II and co-stimulatory molecules, thereby inhibiting their ability to induce T cell activation. In addition, controls the inflammatory response of macrophages by reprogramming essential metabolic pathways including mTOR signaling. This Orcinus orca (Killer whale) protein is Interleukin-10 (IL10).